We begin with the raw amino-acid sequence, 180 residues long: Large ribosomal subunit protein uL6 (180 aa).

This sequence belongs to the universal ribosomal protein uL6 family. In terms of assembly, part of the 50S ribosomal subunit.

In terms of biological role, this protein binds to the 23S rRNA, and is important in its secondary structure. It is located near the subunit interface in the base of the L7/L12 stalk, and near the tRNA binding site of the peptidyltransferase center. In Dictyoglomus thermophilum (strain ATCC 35947 / DSM 3960 / H-6-12), this protein is Large ribosomal subunit protein uL6.